We begin with the raw amino-acid sequence, 267 residues long: Tryptophan synthase alpha chain (267 aa).

Residues Glu-43 and Asp-54 each act as proton acceptor in the active site.

It belongs to the TrpA family. As to quaternary structure, tetramer of two alpha and two beta chains.

It carries out the reaction (1S,2R)-1-C-(indol-3-yl)glycerol 3-phosphate + L-serine = D-glyceraldehyde 3-phosphate + L-tryptophan + H2O. Its pathway is amino-acid biosynthesis; L-tryptophan biosynthesis; L-tryptophan from chorismate: step 5/5. Its function is as follows. The alpha subunit is responsible for the aldol cleavage of indoleglycerol phosphate to indole and glyceraldehyde 3-phosphate. This Bacillus pumilus (strain SAFR-032) protein is Tryptophan synthase alpha chain.